A 312-amino-acid polypeptide reads, in one-letter code: Malate dehydrogenase (312 aa).

NAD(+) is bound by residues 12-17 and Asp-36; that span reads GAGFTG. Arg-87 and Arg-93 together coordinate substrate. Residues Asn-100 and 123–125 contribute to the NAD(+) site; that span reads LTN. Asn-125 is a binding site for substrate. Ser-149 is modified (phosphoserine). Arg-156 provides a ligand contact to substrate. The active-site Proton acceptor is His-180.

This sequence belongs to the LDH/MDH superfamily. MDH type 3 family.

The enzyme catalyses (S)-malate + NAD(+) = oxaloacetate + NADH + H(+). In terms of biological role, catalyzes the reversible oxidation of malate to oxaloacetate. This chain is Malate dehydrogenase, found in Geobacillus thermodenitrificans.